The chain runs to 55 residues: ATP synthase F(0) complex subunit 8 (55 aa).

Residues 4 to 24 traverse the membrane as a helical segment; the sequence is LNPAPWFTILVFSWMIFLAII. Over residues 32-41 the composition is skewed to polar residues; the sequence is TSPNDSSPLS. Residues 32–55 are disordered; sequence TSPNDSSPLSTEKHKTESWDWPWQ.

It belongs to the ATPase protein 8 family. Component of the ATP synthase complex composed at least of ATP5F1A/subunit alpha, ATP5F1B/subunit beta, ATP5MC1/subunit c (homooctomer), MT-ATP6/subunit a, MT-ATP8/subunit 8, ATP5ME/subunit e, ATP5MF/subunit f, ATP5MG/subunit g, ATP5MK/subunit k, ATP5MJ/subunit j, ATP5F1C/subunit gamma, ATP5F1D/subunit delta, ATP5F1E/subunit epsilon, ATP5PF/subunit F6, ATP5PB/subunit b, ATP5PD/subunit d, ATP5PO/subunit OSCP. ATP synthase complex consists of a soluble F(1) head domain (subunits alpha(3) and beta(3)) - the catalytic core - and a membrane F(0) domain - the membrane proton channel (subunits c, a, 8, e, f, g, k and j). These two domains are linked by a central stalk (subunits gamma, delta, and epsilon) rotating inside the F1 region and a stationary peripheral stalk (subunits F6, b, d, and OSCP).

It is found in the mitochondrion membrane. In terms of biological role, subunit 8, of the mitochondrial membrane ATP synthase complex (F(1)F(0) ATP synthase or Complex V) that produces ATP from ADP in the presence of a proton gradient across the membrane which is generated by electron transport complexes of the respiratory chain. ATP synthase complex consist of a soluble F(1) head domain - the catalytic core - and a membrane F(1) domain - the membrane proton channel. These two domains are linked by a central stalk rotating inside the F(1) region and a stationary peripheral stalk. During catalysis, ATP synthesis in the catalytic domain of F(1) is coupled via a rotary mechanism of the central stalk subunits to proton translocation. In vivo, can only synthesize ATP although its ATP hydrolase activity can be activated artificially in vitro. Part of the complex F(0) domain. This chain is ATP synthase F(0) complex subunit 8, found in Formosania lacustris (Oriental stream loach).